We begin with the raw amino-acid sequence, 141 residues long: Flagellar assembly factor FliW (141 aa).

Belongs to the FliW family. Interacts with translational regulator CsrA and flagellin(s).

It localises to the cytoplasm. Functionally, acts as an anti-CsrA protein, binds CsrA and prevents it from repressing translation of its target genes, one of which is flagellin. Binds to flagellin and participates in the assembly of the flagellum. This chain is Flagellar assembly factor FliW, found in Clostridium acetobutylicum (strain ATCC 824 / DSM 792 / JCM 1419 / IAM 19013 / LMG 5710 / NBRC 13948 / NRRL B-527 / VKM B-1787 / 2291 / W).